The sequence spans 404 residues: MKRTVIMMLDSFGVGAAGDAAKFGDLGSDTFGHIAKACAEGKADIGREGPLTLPNLARLGLAHAAMESTGAFAPGFADDVELIGAYGHAQELSSGKDTPSGHWEMAGVPVLFDWGYFSEHQNSFPKELTDKILARAGLDGFLGNCHASGTTILEELGEEHMRSGKPIFYTSADSVFQIACHEGTFGLENLYRLCEIAREELEPYNIGRVIARPFDGTGPSDFARTGNRKDYSLEPPAKTVLDKLKAAGGEVVSVGKIADIYAYCGITKKVKANGLEALFDATLDEVKSAGENTIVFTNFVDFDSHYGHRRDVAGYAKGLEYFDSRLPEMLALLDEDDLLILTADHGCDPTWQGTDHTREYVPVLAYGAGLKAGSLGRRNSFADIGQSIASYFKLEPMEYGESFI.

Mn(2+) is bound by residues Asp-10, Asp-303, His-308, Asp-344, His-345, and His-356.

Belongs to the phosphopentomutase family. Mn(2+) is required as a cofactor.

It is found in the cytoplasm. It catalyses the reaction 2-deoxy-alpha-D-ribose 1-phosphate = 2-deoxy-D-ribose 5-phosphate. It carries out the reaction alpha-D-ribose 1-phosphate = D-ribose 5-phosphate. It functions in the pathway carbohydrate degradation; 2-deoxy-D-ribose 1-phosphate degradation; D-glyceraldehyde 3-phosphate and acetaldehyde from 2-deoxy-alpha-D-ribose 1-phosphate: step 1/2. Its function is as follows. Isomerase that catalyzes the conversion of deoxy-ribose 1-phosphate (dRib-1-P) and ribose 1-phosphate (Rib-1-P) to deoxy-ribose 5-phosphate (dRib-5-P) and ribose 5-phosphate (Rib-5-P), respectively. The polypeptide is Phosphopentomutase (Shewanella sp. (strain MR-4)).